The chain runs to 583 residues: Kelch-like protein 35 (583 aa).

The 79-residue stretch at 41–119 folds into the BTB domain; it reads TDVVLRAGGR…VYGAGVRLRA (79 aa). The BACK domain maps to 146 to 248; the sequence is LEGRLRAANS…LEHVRLPLLA (103 aa). 6 Kelch repeats span residues 301-350, 352-394, 395-441, 443-489, 490-531, and 533-579; these read VIVV…ALRN, VYVS…VVQG, QLFA…SCAG, LFVI…SLED, TIYV…VCDG, and VHIL…TIIQ.

The protein is Kelch-like protein 35 (KLHL35) of Homo sapiens (Human).